The primary structure comprises 342 residues: Methylthioribose-1-phosphate isomerase (342 aa).

Substrate contacts are provided by residues 49–51 (RGA), Arg-86, and Gln-187. The active-site Proton donor is Asp-228. Substrate is bound at residue 238 to 239 (NK).

The protein belongs to the eIF-2B alpha/beta/delta subunits family. MtnA subfamily.

The catalysed reaction is 5-(methylsulfanyl)-alpha-D-ribose 1-phosphate = 5-(methylsulfanyl)-D-ribulose 1-phosphate. It functions in the pathway amino-acid biosynthesis; L-methionine biosynthesis via salvage pathway; L-methionine from S-methyl-5-thio-alpha-D-ribose 1-phosphate: step 1/6. Catalyzes the interconversion of methylthioribose-1-phosphate (MTR-1-P) into methylthioribulose-1-phosphate (MTRu-1-P). The sequence is that of Methylthioribose-1-phosphate isomerase from Serratia proteamaculans (strain 568).